Here is a 505-residue protein sequence, read N- to C-terminus: Calcium/calmodulin-dependent protein kinase kinase 1 (505 aa).

The disordered stretch occupies residues T26–L61. Phosphoserine occurs at positions 67 and 74. An Asymmetric dimethylarginine modification is found at R78. S100 is modified (phosphoserine). Phosphothreonine is present on T108. Positions Y128–V409 constitute a Protein kinase domain. ATP is bound by residues I134–V142 and K157. The tract at residues Q167–Q189 is RP domain. The active-site Proton acceptor is the D275. An autoinhibitory domain region spans residues K435–L440. The interval V438–F463 is calmodulin-binding. 3 positions are modified to phosphoserine: S458, S475, and S492. Residues G460 to S505 form a disordered region.

This sequence belongs to the protein kinase superfamily. Ser/Thr protein kinase family. Interacts with CAMK4 and calmodulin. Post-translationally, appears to be autophosphorylated in a Ca(2+)/calmodulin-dependent manner. Phosphorylated at multiple sites by PRCAKA/PKA. Phosphorylation of Ser-458 is blocked upon binding to Ca(2+)/calmodulin. In vitro, phosphorylated by CAMK1 and CAMK4.

The protein localises to the cytoplasm. It localises to the nucleus. It catalyses the reaction L-seryl-[protein] + ATP = O-phospho-L-seryl-[protein] + ADP + H(+). It carries out the reaction L-threonyl-[protein] + ATP = O-phospho-L-threonyl-[protein] + ADP + H(+). Activated by Ca(2+)/calmodulin. Binding of calmodulin may relieve intrasteric autoinhibition. Partially inhibited upon phosphorylation by PRCAKA/PKA. May be regulated through phosphorylation by CAMK1 and CAMK4. Calcium/calmodulin-dependent protein kinase that belongs to a proposed calcium-triggered signaling cascade involved in a number of cellular processes. Phosphorylates CAMK1, CAMK1D, CAMK1G and CAMK4. Involved in regulating cell apoptosis. Promotes cell survival by phosphorylating AKT1/PKB that inhibits pro-apoptotic BAD/Bcl2-antagonist of cell death. The sequence is that of Calcium/calmodulin-dependent protein kinase kinase 1 (CAMKK1) from Homo sapiens (Human).